The primary structure comprises 408 residues: Acetate kinase (408 aa).

N7 lines the Mg(2+) pocket. Residue K14 participates in ATP binding. A substrate-binding site is contributed by R91. D148 acts as the Proton donor/acceptor in catalysis. Residues 208 to 212 (HLGNG), 283 to 285 (DFR), and 331 to 335 (GIGEN) each bind ATP. Residue E384 coordinates Mg(2+).

It belongs to the acetokinase family. Homodimer. Mg(2+) serves as cofactor. Requires Mn(2+) as cofactor.

The protein resides in the cytoplasm. The catalysed reaction is acetate + ATP = acetyl phosphate + ADP. The protein operates within metabolic intermediate biosynthesis; acetyl-CoA biosynthesis; acetyl-CoA from acetate: step 1/2. Inhibited by diethylpyrocarbonate, hydroxylamine and phenylglyoxal. Functionally, catalyzes the formation of acetyl phosphate from acetate and ATP. Can also catalyze the reverse reaction. Can also phosphorylate propionate, but has very low activity toward butyrate. The sequence is that of Acetate kinase from Methanosarcina thermophila.